The sequence spans 136 residues: NADPH-dependent 7-cyano-7-deazaguanine reductase (136 aa).

The active-site Thioimide intermediate is Cys53. Asp60 acts as the Proton donor in catalysis. Residues Val75–Leu77 and His94–Glu95 contribute to the substrate site.

Belongs to the GTP cyclohydrolase I family. QueF type 1 subfamily.

The protein resides in the cytoplasm. It carries out the reaction 7-aminomethyl-7-carbaguanine + 2 NADP(+) = 7-cyano-7-deazaguanine + 2 NADPH + 3 H(+). It functions in the pathway tRNA modification; tRNA-queuosine biosynthesis. Catalyzes the NADPH-dependent reduction of 7-cyano-7-deazaguanine (preQ0) to 7-aminomethyl-7-deazaguanine (preQ1). This Trichormus variabilis (strain ATCC 29413 / PCC 7937) (Anabaena variabilis) protein is NADPH-dependent 7-cyano-7-deazaguanine reductase.